A 447-amino-acid polypeptide reads, in one-letter code: MEPGPCSRPAEPGHCVSGPAGAGSAFPESPLSVAGAEPGNRPGTVAAVLPAGGCGERMGVRTPKQFCRVLERPLISYTLQAMERVCWIKDIVVTVTGENMEAMRSIIQRYGHKRISLAEAGATRHRSIFNGLKALAEDQPDCKLTKPEVVIIHDAVRPFVEEDILLRVVLAAKEHGAAGAIRPLVSTVISPSADGHLDHSLDRAKHRASEMPQAFLFDVIYEAYQQCSDFDLEFGTECLQLALKYCHRKAKLVEGPPALWKVTYKQDLCAAEAMIKEKISQEICVVMNTKDEESVGHLLEEALRKELNCMKITSTVMDHIGGDIRNFIEQCYSFICVNVVSPDSQETRKLLRILEESSLPLLYPVVVVLVHCFDFTSVPLAQKMESLVWIRGLAKEVKERNILLSGLLLNYSQDEQKLQESLGQSAAIIAALVKERNSALVGQLLVA.

Belongs to the IspD/TarI cytidylyltransferase family. IspD subfamily. In terms of assembly, homodimer.

The protein resides in the cytoplasm. The protein localises to the cytosol. The catalysed reaction is D-ribitol 5-phosphate + CTP + H(+) = CDP-L-ribitol + diphosphate. It catalyses the reaction D-ribose 5-phosphate + CTP + H(+) = CDP-D-ribose + diphosphate. It carries out the reaction D-ribulose 5-phosphate + CTP + H(+) = CDP-D-ribulose + diphosphate. It functions in the pathway protein modification; protein glycosylation. In terms of biological role, cytidylyltransferase required for protein O-linked mannosylation. Catalyzes the formation of CDP-ribitol nucleotide sugar from D-ribitol 5-phosphate. CDP-ribitol is a substrate of FKTN during the biosynthesis of the phosphorylated O-mannosyl trisaccharide (N-acetylgalactosamine-beta-3-N-acetylglucosamine-beta-4-(phosphate-6-)mannose), a carbohydrate structure present in alpha-dystroglycan (DAG1), which is required for binding laminin G-like domain-containing extracellular proteins with high affinity. Shows activity toward other pentose phosphate sugars and mediates formation of CDP-ribulose or CDP-ribose using CTP and ribulose-5-phosphate or ribose-5-phosphate, respectively. Not involved in dolichol production. The polypeptide is D-ribitol-5-phosphate cytidylyltransferase (Crppa) (Mus musculus (Mouse)).